A 1061-amino-acid polypeptide reads, in one-letter code: DNA primase TraC (1061 aa).

The 89-residue stretch at 850 to 938 folds into the Toprim domain; that stretch reads PALVIGEGYA…GKAIFPIFAP (89 aa). The tract at residues 1034–1061 is disordered; that stretch reads EGQRQKVQQLKQQDIEQQEQRQRRARTY.

Functionally, required for autonomous replication in E.coli. Transferred into the recipient cell during bacterial conjugation. Catalyzes the synthesis of short oligoribonucleotide primers with CpA or pCpA at their 5'-termini on a single-stranded template DNA. The sequence is that of DNA primase TraC (traC) from Escherichia coli.